The chain runs to 395 residues: Protein pelota (395 aa).

The PGF motif motif lies at 210 to 212 (PGF). Residues 371-395 (PELEDSDDDDDEDGAAGGVADSDSD) are disordered. Residues 372 to 384 (ELEDSDDDDDEDG) show a composition bias toward acidic residues.

This sequence belongs to the eukaryotic release factor 1 family. Pelota subfamily. In terms of assembly, component of the Pelota-HBS1L complex, also named Dom34-Hbs1 complex, composed of pelo and HBS1. Interacts with Pink1 and Cnot4; the interaction with Cnot4 appears to be Pink1-dependent. A divalent metal cation serves as cofactor. In terms of tissue distribution, expressed in ovaries and muscles (at protein level). Expressed throughout all development stages.

The protein resides in the nucleus. The protein localises to the cytoplasm. Component of the Pelota-HBS1L complex, a complex that recognizes stalled ribosomes and triggers the No-Go Decay (NGD) pathway. In the Pelota-HBS1L complex, pelo recognizes ribosomes stalled at the 3' end of an mRNA and engages stalled ribosomes by destabilizing mRNA in the mRNA channel. Following ribosome-binding, the Pelota-HBS1L complex promotes recruitment of pix, which drives the disassembly of stalled ribosomes, followed by degradation of damaged mRNAs as part of the NGD pathway. Required prior to the first meiotic division for spindle formation and nuclear envelope breakdown during spermatogenesis. Together with HBS1, promotes spermatid individualization during spermatogenesis. Required for ovarian germ line stem cell self-renewal and oocyte development during oogenesis. Together with HSB1, required for transposon silencing in the ovary and testis. As part of the Pink1-regulated signaling, is recruited to damaged mitochondrial and is required for recruitment of autophagy receptors and induction of mitophagy. Required for normal eye patterning and for mitotic divisions in the ovary. In Drosophila melanogaster (Fruit fly), this protein is Protein pelota (pelo).